The chain runs to 203 residues: Small ribosomal subunit protein uS4 (203 aa).

The 62-residue stretch at 93–154 (CRFDNVVFRA…KSRNMDAVRN (62 aa)) folds into the S4 RNA-binding domain.

This sequence belongs to the universal ribosomal protein uS4 family. As to quaternary structure, part of the 30S ribosomal subunit. Contacts protein S5. The interaction surface between S4 and S5 is involved in control of translational fidelity.

In terms of biological role, one of the primary rRNA binding proteins, it binds directly to 16S rRNA where it nucleates assembly of the body of the 30S subunit. Its function is as follows. With S5 and S12 plays an important role in translational accuracy. The polypeptide is Small ribosomal subunit protein uS4 (Chloroherpeton thalassium (strain ATCC 35110 / GB-78)).